Consider the following 344-residue polypeptide: C-C chemokine receptor-like 2 (344 aa).

At 1 to 43 (MANYTLAPEDEYDVLIEGELESDEAEQCDKYDAQALSAQLVPS) the chain is on the extracellular side. N-linked (GlcNAc...) asparagine glycosylation occurs at Asn3. A helical membrane pass occupies residues 44-64 (LCSAVFVIGVLDNLLVVLILV). At 65-74 (KYKGLKRVEN) the chain is on the cytoplasmic side. A helical transmembrane segment spans residues 75–95 (IYLLNLAVSNLCFLLTLPFWA). Over 96–104 (HAGGDPMCK) the chain is Extracellular. A disulfide bond links Cys103 and Cys181. Residues 105–125 (ILIGLYFVGLYSETFFNCLLT) form a helical membrane-spanning segment. Topologically, residues 126-144 (VQRYLVFLHKGNFFSARRR) are cytoplasmic. Residues 145–165 (VPCGIITSVLAWVTAILATLP) form a helical membrane-spanning segment. The Extracellular segment spans residues 166–198 (EFVVYKPQMEDQKYKCAFSRTPFLPADETFWKH). A helical transmembrane segment spans residues 199 to 219 (FLTLKMNISVLVLPLFIFTFL). Residues 220–238 (YVQMRKTLRFREQRYSLFK) are Cytoplasmic-facing. A helical transmembrane segment spans residues 239 to 259 (LVFAIMVVFLLMWAPYNIAFF). The Extracellular segment spans residues 260-286 (LSTFKEHFSLSDCKSSYNLDKSVHITK). The helical transmembrane segment at 287 to 307 (LIATTHCCINPLLYAFLDGTF) threads the bilayer. The Cytoplasmic segment spans residues 308-344 (SKYLCRCFHLRSNTPLQPRGQSAQGTSREEPDHSTEV). Positions 324 to 333 (QPRGQSAQGT) are enriched in polar residues. A disordered region spans residues 324 to 344 (QPRGQSAQGTSREEPDHSTEV). Residues 334–344 (SREEPDHSTEV) are compositionally biased toward basic and acidic residues.

This sequence belongs to the G-protein coupled receptor 1 family. Expressed abundantly in immunal tissues such as spleen, fetal liver, lymph node and bone marrow. Strong expression also in lung and heart. Expressed in almost all hematopoietic cells including monocytes, macrophages, PMNs, T-cells (both CD4+ and CD8+), monocyte-derived iDCs, NK cells, and CD34+ progenitor cells. B-cells expressed isoform 1 but not isoform 2. Up-regulated on synovial neutrophils of rheumatoid arthritis patients.

It localises to the cell membrane. Receptor for CCL19 and chemerin/RARRES2. Does not appear to be a signaling receptor, but may have a role in modulating chemokine-triggered immune responses by capturing and internalizing CCL19 or by presenting RARRES2 ligand to CMKLR1, a functional signaling receptors. Plays a critical role for the development of Th2 responses. This is C-C chemokine receptor-like 2 (CCRL2) from Homo sapiens (Human).